The primary structure comprises 230 residues: Cytidylate kinase (230 aa).

Residue Gly16–Thr24 coordinates ATP.

The protein belongs to the cytidylate kinase family. Type 1 subfamily.

It localises to the cytoplasm. It catalyses the reaction CMP + ATP = CDP + ADP. It carries out the reaction dCMP + ATP = dCDP + ADP. This Lactobacillus gasseri (strain ATCC 33323 / DSM 20243 / BCRC 14619 / CIP 102991 / JCM 1131 / KCTC 3163 / NCIMB 11718 / NCTC 13722 / AM63) protein is Cytidylate kinase.